A 356-amino-acid polypeptide reads, in one-letter code: tRNA-splicing endonuclease subunit SEN2 (356 aa).

Active-site residues include Y268, H276, and K307.

The protein belongs to the tRNA-intron endonuclease family. Heterotetramer composed of SEN2, SEN15, SEN34 and SEN54. Interacts directly with SEN54.

It carries out the reaction pretRNA = a 3'-half-tRNA molecule with a 5'-OH end + a 5'-half-tRNA molecule with a 2',3'-cyclic phosphate end + an intron with a 2',3'-cyclic phosphate and a 5'-hydroxyl terminus.. Constitutes one of the two catalytic subunit of the tRNA-splicing endonuclease complex, a complex responsible for identification and cleavage of the splice sites in pre-tRNA. It cleaves pre-tRNA at the 5'- and 3'-splice sites to release the intron. The products are an intron and two tRNA half-molecules bearing 2',3'-cyclic phosphate and 5'-OH termini. There are no conserved sequences at the splice sites, but the intron is invariably located at the same site in the gene, placing the splice sites an invariant distance from the constant structural features of the tRNA body. This subunit may anchor the endonuclease complex to the nuclear membrane. Probably carries the active site for 5'-splice site cleavage. The chain is tRNA-splicing endonuclease subunit SEN2 (SEN2) from Eremothecium gossypii (strain ATCC 10895 / CBS 109.51 / FGSC 9923 / NRRL Y-1056) (Yeast).